The primary structure comprises 558 residues: Scarecrow-like protein 6 (558 aa).

The interval 19–90 (FSSSFPQPPS…GGDATTDEQC (72 aa)) is disordered. The span at 54-75 (SVLDSLISPTSSSTVSSSHGGN) shows a compositional bias: low complexity. Residues 196–554 (KRLNPGPVGI…TELVGVSAWR (359 aa)) enclose the GRAS domain. Residues 203–257 (VGITEQLVKAAEVIESDTCLAQGILARLNQQLSSPVGKPLERAAFYFKEALNNLL) are leucine repeat I (LRI). A VHIID region spans residues 276-340 (YKSFSEISPV…DNAAPLSLKI (65 aa)). A VHIID motif is present at residues 307–311 (LHIID). Residues 356–388 (FTQDNLKHFASEINISLDIQVLSLDLLGSISWP) form a leucine repeat II (LRII) region. Positions 396 to 479 (VAVNISAASF…RFLIQPEIEK (84 aa)) are PFYRE. The segment at 482–554 (LDRSRPIERP…TELVGVSAWR (73 aa)) is SAW.

It belongs to the GRAS family. Interacts with Meloidogyne incognita 16D10. In terms of tissue distribution, expressed in seedlings, roots, leaves, flowers and siliques.

It is found in the nucleus. Probable transcription factor involved in plant development. This is Scarecrow-like protein 6 (SCL6) from Arabidopsis thaliana (Mouse-ear cress).